We begin with the raw amino-acid sequence, 186 residues long: Mediator of RNA polymerase II transcription subunit 10a (186 aa).

The protein belongs to the Mediator complex subunit 10 family. As to quaternary structure, mono-, di- and oligomers. Component of the Mediator complex. Interacts with GEBPL.

It is found in the nucleus. Functionally, component of the Mediator complex, a coactivator involved in the regulated transcription of nearly all RNA polymerase II-dependent genes. Mediator functions as a bridge to convey information from gene-specific regulatory proteins to the basal RNA polymerase II transcription machinery. The Mediator complex, having a compact conformation in its free form, is recruited to promoters by direct interactions with regulatory proteins and serves for the assembly of a functional pre-initiation complex with RNA polymerase II and the general transcription factors. The protein is Mediator of RNA polymerase II transcription subunit 10a of Arabidopsis thaliana (Mouse-ear cress).